The sequence spans 517 residues: Cell division cycle protein 73 (517 aa).

The span at 124–135 (SEPEAKKPRLDG) shows a compositional bias: basic and acidic residues. Disordered stretches follow at residues 124 to 159 (SEPE…SAAK) and 306 to 326 (GHHA…LAKP). Residues 315–324 (DAPPGRPPLA) are compositionally biased toward pro residues.

The protein belongs to the CDC73 family. Component of the PAF1 complex which consists of at least cdc-73, ctr-9, leo-1, pafo-1 and rtfo-1.

The protein resides in the nucleus. Its function is as follows. Component of the PAF1 complex which is a multifunctional complex involved in transcription initiation via genetic interactions with TATA-binding proteins, elongation and transcription-coupled histone modification. The chain is Cell division cycle protein 73 from Caenorhabditis elegans.